The sequence spans 344 residues: GDSL esterase/lipase At1g73610 (344 aa).

The signal sequence occupies residues 1–24 (MNCLMFFKMLLAFSFISLFYVGNA). Residue asparagine 30 is glycosylated (N-linked (GlcNAc...) asparagine). Serine 42 acts as the Nucleophile in catalysis. Catalysis depends on residues aspartate 319 and histidine 322.

It belongs to the 'GDSL' lipolytic enzyme family.

The protein resides in the secreted. The chain is GDSL esterase/lipase At1g73610 from Arabidopsis thaliana (Mouse-ear cress).